The following is a 243-amino-acid chain: Orotidine 5'-phosphate decarboxylase (243 aa).

Residues Asp-19, Lys-41, 69 to 78 (DLKFFDIPAT), Thr-124, Arg-185, Gln-194, Gly-214, and Arg-215 contribute to the substrate site. Lys-71 (proton donor) is an active-site residue.

It belongs to the OMP decarboxylase family. Type 1 subfamily. As to quaternary structure, homodimer.

The catalysed reaction is orotidine 5'-phosphate + H(+) = UMP + CO2. It participates in pyrimidine metabolism; UMP biosynthesis via de novo pathway; UMP from orotate: step 2/2. Its function is as follows. Catalyzes the decarboxylation of orotidine 5'-monophosphate (OMP) to uridine 5'-monophosphate (UMP). The protein is Orotidine 5'-phosphate decarboxylase of Xanthomonas axonopodis pv. citri (strain 306).